The chain runs to 435 residues: Zinc finger CCCH domain-containing protein 67 (435 aa).

The disordered stretch occupies residues 1 to 91 (MSKPEETSDP…DQKEEEEGSE (91 aa)). 3 consecutive C3H1-type zinc fingers follow at residues 101–129 (RPDS…HPVR), 148–176 (NPKL…HMKE), and 194–222 (RPGE…HPDP). The segment at 235–274 (GNNGGSFSPKAPSQASSTSWSSTRHMNGTGTAPFIPSMFP) is disordered. Over residues 247-256 (SQASSTSWSS) the composition is skewed to low complexity. C3H1-type zinc fingers lie at residues 334 to 362 (RPDQ…HPKN) and 380 to 408 (RPDQ…HSIP). The tract at residues 412–435 (SPSSSQTVEARQVGANGNEDDSWH) is disordered.

The protein localises to the nucleus. This is Zinc finger CCCH domain-containing protein 67 from Arabidopsis thaliana (Mouse-ear cress).